We begin with the raw amino-acid sequence, 162 residues long: uncharacterized protein (162 aa).

The protein belongs to the baculoviridae 19 kDa protein family.

This is an uncharacterized protein from Tortricidae (ClGV).